The chain runs to 156 residues: Small ribosomal subunit protein uS7 (156 aa).

This sequence belongs to the universal ribosomal protein uS7 family. In terms of assembly, part of the 30S ribosomal subunit. Contacts proteins S9 and S11.

One of the primary rRNA binding proteins, it binds directly to 16S rRNA where it nucleates assembly of the head domain of the 30S subunit. Is located at the subunit interface close to the decoding center, probably blocks exit of the E-site tRNA. The protein is Small ribosomal subunit protein uS7 of Streptococcus agalactiae serotype Ia (strain ATCC 27591 / A909 / CDC SS700).